A 492-amino-acid chain; its full sequence is Catalase-2 (492 aa).

Catalysis depends on residues His-65 and Asn-138. Tyr-348 provides a ligand contact to heme.

The protein belongs to the catalase family. As to quaternary structure, homotetramer and heterotetramer. At least six or seven isozymes are produced from a mixture of 3 gene products. Interacts with NCA1. Interacts with LSD1. Heme serves as cofactor.

It is found in the cytoplasm. Its subcellular location is the cytosol. It localises to the peroxisome matrix. It catalyses the reaction 2 H2O2 = O2 + 2 H2O. Functionally, catalyzes the degradation of hydrogen peroxide (H(2)O(2)) generated by peroxisomal oxidases to water and oxygen, thereby protecting cells from the toxic effects of hydrogen peroxide. The protein is Catalase-2 (CAT2) of Arabidopsis thaliana (Mouse-ear cress).